The primary structure comprises 466 residues: Coagulation factor IX (466 aa).

The signal sequence occupies residues 1–25 (MRCLNMIMAEPPGLITICLLGYLLG). Residues 26 to 46 (ADCTVFLDHEDATKVLSRPKR) constitute a propeptide that is removed on maturation. Ca(2+) contacts are provided by Y47, N48, E53, E54, E61, E63, E66, E67, E72, E73, and E76. The region spanning 47-92 (YNSGKLEEFVQGNLERECMEEKCSFEEAREVFENTEKTTEFWKQYV) is the Gla domain. A 4-carboxyglutamate mark is found at E53, E54, E61, E63, E66, E67, E72, E73, E76, E79, and E82. A Mg(2+)-binding site is contributed by E61. An intrachain disulfide couples C64 to C69. E66 provides a ligand contact to Mg(2+). Residue E72 coordinates Mg(2+). E76 is a Mg(2+) binding site. E82 provides a ligand contact to Ca(2+). Mg(2+) is bound at residue E82. An O-linked (GalNAc...) threonine glycan is attached at T85. Residues E86, D93, G94, and Q96 each contribute to the Ca(2+) site. E86 bears the 4-carboxyglutamate mark. E86 provides a ligand contact to Mg(2+). The EGF-like 1; calcium-binding domain occupies 93-129 (DGDQCESNPCLNGGICKDDINSYECWCQTGFEGKNCE). 10 disulfides stabilise this stretch: C97/C108, C102/C117, C119/C128, C134/C145, C141/C155, C157/C170, C178/C340, C257/C273, C387/C401, and C412/C440. S99 is a glycosylation site (O-linked (Glc...) serine). The Ca(2+) site is built by D110 and D111. D110 is modified ((3R)-3-hydroxyaspartate). At S114 the chain carries Phosphoserine. Residues 130 to 171 (LDVTCNIKNGRCKQFCKLDADNKVVCSCTTGYQLAEDQKSCE) enclose the EGF-like 2 domain. A propeptide spans 193–231 (AETLFLNMDYENSTTDYENSAEAEKNVDNVTQPLNDLTR) (activation peptide). At Y202 the chain carries Sulfotyrosine. Phosphoserine is present on S205. T206 is subject to Phosphothreonine; alternate. An O-linked (GalNAc...) threonine; alternate glycan is attached at T206. An N-linked (GlcNAc...) asparagine glycan is attached at N221. O-linked (GalNAc...) threonine glycosylation is found at T223 and T230. One can recognise a Peptidase S1 domain in the interval 232-464 (IVGGKTAKPG…YVNWIKEKTK (233 aa)). H272 functions as the Charge relay system in the catalytic mechanism. Residues E286, N288, E291, E293, and E296 each contribute to the Ca(2+) site. The active-site Charge relay system is the D320. S416 functions as the Charge relay system in the catalytic mechanism.

This sequence belongs to the peptidase S1 family. In terms of assembly, heterodimer of a light chain and a heavy chain; disulfide-linked. Interacts (inactive and activated) with F11 (activated) in calcium-dependent manner. Interacts with SERPINC1. Post-translationally, the iron and 2-oxoglutarate dependent 3-hydroxylation of aspartate and asparagine is (R) stereospecific within EGF domains. In terms of processing, activated by factor XIa, which excises the activation peptide. The propeptide can also be removed by snake venom protease. Activated by coagulation factor VIIa-tissue factor (F7-F3) complex in calcium-dependent manner. Predominantly O-glucosylated at Ser-99 by POGLUT1 in vitro.

The protein resides in the secreted. The enzyme catalyses Selective cleavage of Arg-|-Ile bond in factor X to form factor Xa.. Functionally, factor IX is a vitamin K-dependent plasma protein that participates in the intrinsic pathway of blood coagulation by converting factor X to its active form in the presence of Ca(2+) ions, phospholipids, and factor VIIIa. In Felis catus (Cat), this protein is Coagulation factor IX (F9).